A 273-amino-acid chain; its full sequence is Hydroxyethylthiazole kinase 2 (273 aa).

Residue Met-45 coordinates substrate. Positions 120 and 173 each coordinate ATP. Gly-200 lines the substrate pocket.

Belongs to the Thz kinase family. It depends on Mg(2+) as a cofactor.

It carries out the reaction 5-(2-hydroxyethyl)-4-methylthiazole + ATP = 4-methyl-5-(2-phosphooxyethyl)-thiazole + ADP + H(+). It participates in cofactor biosynthesis; thiamine diphosphate biosynthesis; 4-methyl-5-(2-phosphoethyl)-thiazole from 5-(2-hydroxyethyl)-4-methylthiazole: step 1/1. Functionally, catalyzes the phosphorylation of the hydroxyl group of 4-methyl-5-beta-hydroxyethylthiazole (THZ). The protein is Hydroxyethylthiazole kinase 2 of Leuconostoc mesenteroides subsp. mesenteroides (strain ATCC 8293 / DSM 20343 / BCRC 11652 / CCM 1803 / JCM 6124 / NCDO 523 / NBRC 100496 / NCIMB 8023 / NCTC 12954 / NRRL B-1118 / 37Y).